Reading from the N-terminus, the 476-residue chain is Glycogen synthase (476 aa).

Lys-15 lines the ADP-alpha-D-glucose pocket.

The protein belongs to the glycosyltransferase 1 family. Bacterial/plant glycogen synthase subfamily.

It catalyses the reaction [(1-&gt;4)-alpha-D-glucosyl](n) + ADP-alpha-D-glucose = [(1-&gt;4)-alpha-D-glucosyl](n+1) + ADP + H(+). It participates in glycan biosynthesis; glycogen biosynthesis. In terms of biological role, synthesizes alpha-1,4-glucan chains using ADP-glucose. The protein is Glycogen synthase of Streptococcus agalactiae serotype Ia (strain ATCC 27591 / A909 / CDC SS700).